We begin with the raw amino-acid sequence, 1061 residues long: Transcription termination factor 2 (1061 aa).

2 disordered regions span residues 1 to 163 (MSSE…TAEA) and 212 to 253 (ILSS…VKTS). The segment covering 32 to 46 (LSKSSRLSKSSRPSS) has biased composition (low complexity). A phosphoserine mark is found at S108 and S110. The segment covering 138 to 152 (LSDDDSEIEYSDEVQ) has biased composition (acidic residues). A phosphoserine mark is found at S214 and S215. Position 216 is a phosphothreonine (T216). Residues 237 to 253 (KSLSPRSSAGASVVKTS) are compositionally biased toward polar residues. The region spanning 452–652 (WRERKLPRGG…YALLKFLRCS (201 aa)) is the Helicase ATP-binding domain. 465–472 (DDMGLGKT) lines the ATP pocket. The tract at residues 485 to 523 (GQEMSEGKDESSDSDSEDDKNKKRKSVTGWKSKGRKDTR) is disordered. The span at 506-522 (KKRKSVTGWKSKGRKDT) shows a compositional bias: basic residues. A DEAH box motif is present at residues 603–606 (DEAH). In terms of domain architecture, Helicase C-terminal spans 891-1056 (KINMVIQILK…SSKLTIDDLK (166 aa)).

It belongs to the SNF2/RAD54 helicase family.

The protein localises to the nucleus. DsDNA-dependent ATPase which acts as a transcription termination factor by coupling ATP hydrolysis with removal of RNA polymerase II from the DNA template. The polypeptide is Transcription termination factor 2 (lds) (Drosophila melanogaster (Fruit fly)).